Consider the following 611-residue polypeptide: MASKIIAGKPDDTEYEIIEGESESALAAGTSPWMNSSTLKLRHRIGRGPFGDVWLATHHQSTEDYDEHHEVAIKMLYPIKEDQRRVVVDKFEDLFSKCQGLENVCLLRGVSSINGKICVVMKFYEGSLGDKMARLKGGKLSLPDVLRYGVDLATGILELHSKGFLILNLKPSNFLLSDNDKAILGDVGIPYLLLSIPLPSSDMTERLGTPNYMAPEQWQPDVRGPMSFETDSWGFGCSIVEMLTGVQPWSGRSADEIYDLVVRKQEKLSIPSSIPPPLENLLRGCFMYDLRSRPSMTDILLVLKSLQNSEEEQVRRGIDSREIRKSSATLGYTEWFLSKDHLQVRDTVRSRKPANSCKHENMDVPEGMVVGLERDSTDPDGFVLVKVHGVHDPLRVHVSVLERVTNGLASGDWVRLKVRKDKRHSPVGVLHSIDREGNVAVGFIGLPTLWKGTSSQLQMAKVYSVGQFVKLKANVVIPRFKWMRKGRGIWATGRISQVLPNGCLEVDFPGMLPFGEEHGSYLADPAEVEIVNFNTCQGAVEKYQHLEDFHWAVRPLLIAMGLLTAMKLGICVRKKIGRSKDGKQRDGSTGQGDCKIPDGKGSDKSKWLVFF.

Topologically, residues 1–555 (MASKIIAGKP…LEDFHWAVRP (555 aa)) are cytoplasmic. The 268-residue stretch at 39–306 (LKLRHRIGRG…TDILLVLKSL (268 aa)) folds into the Protein kinase domain. Residues 45–53 (IGRGPFGDV) and lysine 74 each bind ATP. The helical transmembrane segment at 556–572 (LLIAMGLLTAMKLGICV) threads the bilayer. Topologically, residues 573 to 611 (RKKIGRSKDGKQRDGSTGQGDCKIPDGKGSDKSKWLVFF) are chloroplast intermembrane. Residues 579-606 (SKDGKQRDGSTGQGDCKIPDGKGSDKSK) form a disordered region. Over residues 595-606 (KIPDGKGSDKSK) the composition is skewed to basic and acidic residues.

Belongs to the protein kinase superfamily. Ser/Thr protein kinase family. In terms of assembly, associates with the TOC complex containing, at least, translocons at the chloroplast envelope (e.g. TOCs and TICs such as TOC159, TOC75, TOC33 and TIC56).

The protein resides in the plastid. The protein localises to the chloroplast outer membrane. The catalysed reaction is L-seryl-[protein] + ATP = O-phospho-L-seryl-[protein] + ADP + H(+). The enzyme catalyses L-threonyl-[protein] + ATP = O-phospho-L-threonyl-[protein] + ADP + H(+). In terms of biological role, serine/threonine protein kinase acting as a regulatory component of the plastid protein import machinery by phosphorylating import receptors (e.g. the A-domain of TOC159, TOC120 and TOC132). Supports preprotein import and contributes to efficient chloroplast biogenesis, thus being required for survival during de-etiolation. The protein is Protein KINASE OF THE OUTER CHLOROPLAST MEMBRANE 1 of Arabidopsis thaliana (Mouse-ear cress).